We begin with the raw amino-acid sequence, 457 residues long: Siroheme synthase (457 aa).

The segment at 1–204 is precorrin-2 dehydrogenase /sirohydrochlorin ferrochelatase; the sequence is MDHLPIFCQL…NDQKAITETT (204 aa). Residues 22-23 and 43-44 each bind NAD(+); these read DV and LA. The residue at position 128 (Ser128) is a Phosphoserine. The uroporphyrinogen-III C-methyltransferase stretch occupies residues 216-457; that stretch reads GEVVLVGAGP…RDKLNWFSNH (242 aa). Pro225 lines the S-adenosyl-L-methionine pocket. Asp248 acts as the Proton acceptor in catalysis. Lys270 serves as the catalytic Proton donor. S-adenosyl-L-methionine contacts are provided by residues 301 to 303, Ile306, 331 to 332, Met382, and Gly411; these read GGD and TA.

It in the N-terminal section; belongs to the precorrin-2 dehydrogenase / sirohydrochlorin ferrochelatase family. This sequence in the C-terminal section; belongs to the precorrin methyltransferase family.

It catalyses the reaction uroporphyrinogen III + 2 S-adenosyl-L-methionine = precorrin-2 + 2 S-adenosyl-L-homocysteine + H(+). The catalysed reaction is precorrin-2 + NAD(+) = sirohydrochlorin + NADH + 2 H(+). The enzyme catalyses siroheme + 2 H(+) = sirohydrochlorin + Fe(2+). It participates in cofactor biosynthesis; adenosylcobalamin biosynthesis; precorrin-2 from uroporphyrinogen III: step 1/1. The protein operates within cofactor biosynthesis; adenosylcobalamin biosynthesis; sirohydrochlorin from precorrin-2: step 1/1. It functions in the pathway porphyrin-containing compound metabolism; siroheme biosynthesis; precorrin-2 from uroporphyrinogen III: step 1/1. Its pathway is porphyrin-containing compound metabolism; siroheme biosynthesis; siroheme from sirohydrochlorin: step 1/1. It participates in porphyrin-containing compound metabolism; siroheme biosynthesis; sirohydrochlorin from precorrin-2: step 1/1. Functionally, multifunctional enzyme that catalyzes the SAM-dependent methylations of uroporphyrinogen III at position C-2 and C-7 to form precorrin-2 via precorrin-1. Then it catalyzes the NAD-dependent ring dehydrogenation of precorrin-2 to yield sirohydrochlorin. Finally, it catalyzes the ferrochelation of sirohydrochlorin to yield siroheme. This is Siroheme synthase from Escherichia coli O157:H7 (strain EC4115 / EHEC).